Consider the following 307-residue polypeptide: Metapyrocatechase (307 aa).

VOC domains are found at residues 7 to 122 (RPGH…LYAD) and 150 to 269 (RFDH…VFCG). Residues His-153, His-214, and Glu-265 each coordinate Fe cation.

The protein belongs to the extradiol ring-cleavage dioxygenase family. Homotetramer. Fe(2+) is required as a cofactor.

It catalyses the reaction catechol + O2 = (2Z,4E)-2-hydroxy-6-oxohexa-2,4-dienoate + H(+). The protein operates within xenobiotic degradation; toluene degradation. In Pseudomonas putida (Arthrobacter siderocapsulatus), this protein is Metapyrocatechase (xylE).